A 1373-amino-acid polypeptide reads, in one-letter code: Poly(A) RNA polymerase gld-2 homolog B (1373 aa).

Residues 75–91 (NSCHSSNSSSNTSNNNN) are compositionally biased toward low complexity. Disordered stretches follow at residues 75–155 (NSCH…QEKQ), 175–340 (SDCK…FWKT), 425–543 (PDST…QQQK), 734–770 (PQQQ…FADG), 802–866 (CGSG…ALGS), and 880–928 (HPLH…PTPV). The span at 96–112 (GQQQQPLHYCNSNNSHS) shows a compositional bias: polar residues. Low complexity-rich tracts occupy residues 130–152 (QQQQ…QMQQ), 180–219 (SDSN…SCSN), 228–251 (NENS…NTSS), and 274–284 (ESGSSEGAAES). Polar residues-rich tracts occupy residues 295 to 340 (CNSN…FWKT) and 430 to 442 (KSSS…NMIR). The span at 443-485 (SSSNGNSNFSRHQYGHQSTGSGYQQQQQRYRNAQNVYQQYQHQ) shows a compositional bias: low complexity. Basic residues predominate over residues 486 to 502 (QQHHAQQHTHPHFRRKH). Composition is skewed to low complexity over residues 735–753 (QQQQ…GTSS) and 819–844 (AGAL…SGTS). Over residues 855-866 (PSISPTPSALGS) the composition is skewed to polar residues. The segment covering 880–890 (HPLHQQHPPSH) has biased composition (low complexity). The sufficent for interaction with Dcr-2 stretch occupies residues 945 to 1373 (RYLAQARNIE…FAETTAAHVA (429 aa)). Positions 1029 and 1031 each coordinate Mg(2+). Residues 1211-1272 (TLGEHLLGFF…NIEEPFDLSN (62 aa)) form the PAP-associated domain. The span at 1320–1341 (LQQHQQQFEQQLHHPISGQQRS) shows a compositional bias: low complexity. The interval 1320–1359 (LQQHQQQFEQQLHHPISGQQRSAGGGGDGANPVPSTLNPD) is disordered.

It belongs to the DNA polymerase type-B-like family. GLD2 subfamily. In terms of assembly, interacts with orb, an RNA-binding protein, generating an ovarian cytoplasmic polyadenylation complex. Interacts (via C-terminus) with Dcr-2. The cofactor is Mg(2+). Requires Mn(2+) as cofactor. As to expression, expressed in ovaries. Not expressed in adult males.

The protein resides in the cytoplasm. It carries out the reaction RNA(n) + ATP = RNA(n)-3'-adenine ribonucleotide + diphosphate. Cytoplasmic poly(A) RNA polymerase that adds successive AMP monomers to the 3'-end of specific maternal RNAs (bcd, Tl, and tor), forming a poly(A) tail, during late oogenesis and early embryogenesis. In contrast to the canonical nuclear poly(A) RNA polymerase, it only adds poly(A) to selected cytoplasmic mRNAs. Required for localization of mRNAs to both poles of the egg, to recruit or maintain known centrosomal proteins with two types of microtubule organizing centers (MTOCs): the central MTOC that forms between the meiosis II tandem spindles and the centrosomes of the mitotic spindle. Required at the final stage of oogenesis for meiosis I metaphase arrest and for progression beyond this stage. Functions with the RNA-binding protein Dcr-2 to promote cytoplasmic polyadenylation and translational activation of certain mRNAs such as Tl and r2d2. As a consequence, is involved in regulating Toll immune signaling and promoting resistance to fungal infection. This Drosophila melanogaster (Fruit fly) protein is Poly(A) RNA polymerase gld-2 homolog B (wisp).